A 1161-amino-acid chain; its full sequence is MLKFIRGKGQQPSADRHRLQKDLFAYRKTAQHGFPHKPSALAYDPVLKLMAIGTQTGALKVFGQPGVELYGQHTLLNNSASELNVQLLEWVYGTGRILSLTAANQLILWEPVGATLLPIKTLPFDGKLKKVSSLCCSLSKDLLWIGTEGGNIYQLDLHTFTIKEPVIYHDVVLEQVPPAYKLNPGAIESIRQLPNSPSKLLVAYNRGLCVLWDFESASVQRAYIAPGHGQSVGLTVNFEGSEFTWYHADGSYATWSIDNPEPPSNVNYVPYGPDPCKSINRLYKGKRRSNDVIVFSGGMPRSAYGDHNCVSVHASDGHKVCLDFTSKVIDFFVTFENNRDVAEVLVVLLEEELCAYDLTDPNICAIKAPYLHSVHASAVTCNYLASEVVQSVYESILRAGDEQDIDYSNISWPITGGTLPDNLEESVEEDATKLYEILLTGHEDGSVKFWDCTGVLLKPIYNFKTSSIFGSESDFRDDAAADMSAEQVDEGEPPFRKSGLFDPYSDDPRLAVKKIAFCPKTGQLIVGGTAGQIVIADFIDLPEKVSLKYISMNLVSDRDGFVWKGHDQLNVRSNLLDGEAIPTTERGVNISGVLQVLPPASITCMALEASWGLVSGGTAHGLVLFDFKNFVPVFHRCTLNPNDLTGAGEQLSRRKSFKKSLRESFRKLRKGRSTRTNQSNQVPTTLEARPVERQIEARCADDGLGSMVRCLLFAKTYVTNVNITSPTLWSATNASTVSVFLLHLPPAQTAATAVPSASGNAPPHMPRRISAQLAKEIQLKHRAPVVGISIFDQAGSPVDQLNAGENGSPPHRVLIASEEQFKVFSLPQLKPINKYKLTANEGARIRRIHFGSFSCRISPETLQSMHGCSPTKSTRSHGDGEADPNISGSLAVSRGDVYNETALICLTNMGDIMVLSVPELKRQLNAAAVRREDINGVSSLCFTNSGEALYMMSSSELQRIALATSRVVQPTGVVPVEPLENEESVLEENDAENNKETYACDEVVNTYEIKNPSGISICTRPAEENVGRNSVQQVNGVNISNSPNQANETISSSIGDITVDSVRDHLNMTTTTLCSINTEETIGRLSVLSTQTNKASTTVNMSEIPNINISNLEDLESKRNTTETSTSSVVIKSIITNISHEKTNGDNKIGTPKTAPEESQF.

The phospho-regulated basic and hydrophobic (PRBH) motif stretch occupies residues 15–86 (DRHRLQKDLF…NNSASELNVQ (72 aa)). 8 WD repeats span residues 39-72 (SALAYDPVLKLMAIGTQTGALKVFGQPGVELYGQ), 82-128 (ELNV…DGKL), 131-167 (VSSLCCSLSKDLLWIGTEGGNIYQLDLHTFTIKEPVI), 189-223 (SIRQLPNSPSKLLVAYNRGLCVLWDFESASVQRAY), 231-263 (SVGLTVNFEGSEFTWYHADGSYATWSIDNPEPP), 278-320 (SINR…GHKV), 328-358 (VIDFFVTFENNRDVAEVLVVLLEEELCAYDL), and 380-464 (TCNY…YNFK). Residues serine 473 and serine 484 each carry the phosphoserine modification. 2 WD repeats span residues 513–594 (KKIA…SGVL) and 603–664 (TCMA…LRES). Serine 679 bears the Phosphoserine mark. WD repeat units follow at residues 708 to 778 (VRCL…KEIQ), 787 to 832 (GISI…LKPI), 837 to 927 (LTAN…LNAA), and 941 to 964 (CFTNSGEALYMMSSSELQRIALAT). Phosphoserine occurs at positions 808, 869, 876, 887, 889, and 893. Position 1013 is a phosphoserine (serine 1013). Residues 1141–1161 (EKTNGDNKIGTPKTAPEESQF) form a disordered region.

The protein belongs to the WD repeat L(2)GL family. May form multimeric complexes. Interacts with mahj. Interacts with aPKC; leading to phosphorylation. Interacts with ball. Post-translationally, phosphorylated by aPKC which lowers lipid affinity and promotes dissociation from the cell cortex. In developing oocytes, aPKC-mediated phosphorylation restricts activity to the oocyte posterior and is required for oocyte polarity formation. In terms of tissue distribution, expressed in the epithelial cells of the digestive tract and in gonads.

Its subcellular location is the cytoplasm. The protein resides in the cell cortex. Functionally, essential for the development of polarized epithelia, for cell polarity associated with asymmetric cell division of neuroblasts during development, and for oocyte polarity formation. Promotes the formation of actin-rich projections at the oocyte cortex and the posterior enrichment of par-1 which is required for oocyte polarization. Regulates the localization of axis-specifying morphogens such as stau and grk. Its function is as follows. Has an essential role in control of cell proliferation and differentiation during development and could act as a tumor suppressor. Has an accessory function in control of cell proliferation and differentiation during development. This is Lethal(2) giant larvae protein (l(2)gl) from Drosophila melanogaster (Fruit fly).